The following is a 334-amino-acid chain: Probable GTP 3',8-cyclase (334 aa).

Positions 24–256 (PYGRKVTGLR…RKKYMIDGVE (233 aa)) constitute a Radical SAM core domain. Arg-33 lines the GTP pocket. [4Fe-4S] cluster-binding residues include Cys-40 and Cys-44. Tyr-46 contributes to the S-adenosyl-L-methionine binding site. Residue Cys-47 coordinates [4Fe-4S] cluster. Position 85 (Lys-85) interacts with GTP. Residue Gly-89 participates in S-adenosyl-L-methionine binding. Position 113 (Thr-113) interacts with GTP. An S-adenosyl-L-methionine-binding site is contributed by Ser-137. Lys-176 lines the GTP pocket. [4Fe-4S] cluster-binding residues include Cys-269 and Cys-272. A GTP-binding site is contributed by 274-276 (RLR). Cys-286 serves as a coordination point for [4Fe-4S] cluster.

This sequence belongs to the radical SAM superfamily. MoaA family. It depends on [4Fe-4S] cluster as a cofactor.

The catalysed reaction is GTP + AH2 + S-adenosyl-L-methionine = (8S)-3',8-cyclo-7,8-dihydroguanosine 5'-triphosphate + 5'-deoxyadenosine + L-methionine + A + H(+). It functions in the pathway cofactor biosynthesis; molybdopterin biosynthesis. Catalyzes the cyclization of GTP to (8S)-3',8-cyclo-7,8-dihydroguanosine 5'-triphosphate. The chain is Probable GTP 3',8-cyclase from Methanosarcina mazei (strain ATCC BAA-159 / DSM 3647 / Goe1 / Go1 / JCM 11833 / OCM 88) (Methanosarcina frisia).